We begin with the raw amino-acid sequence, 2291 residues long: Protein Ycf2 B (2291 aa).

An ATP-binding site is contributed by 1642-1649; it reads GSIGTGRS.

It belongs to the Ycf2 family.

It localises to the plastid. It is found in the chloroplast stroma. Its function is as follows. Probable ATPase of unknown function. Its presence in a non-photosynthetic plant (Epifagus virginiana) and experiments in tobacco indicate that it has an essential function which is probably not related to photosynthesis. This is Protein Ycf2 B (ycf2-B) from Atropa belladonna (Belladonna).